The primary structure comprises 431 residues: Adenylosuccinate synthetase (431 aa).

GTP is bound by residues 13–19 and 41–43; these read GDEGKGK and GHT. Residue D14 is the Proton acceptor of the active site. Mg(2+)-binding residues include D14 and G41. Residues 14 to 17, 39 to 42, T130, R144, Q225, T240, and R304 contribute to the IMP site; these read DEGK and NAGH. H42 (proton donor) is an active-site residue. Residue 300 to 306 participates in substrate binding; it reads SVTGRPR. GTP contacts are provided by residues R306, 332-334, and 414-416; these read KLD and STG.

It belongs to the adenylosuccinate synthetase family. As to quaternary structure, homodimer. Requires Mg(2+) as cofactor.

It localises to the cytoplasm. It carries out the reaction IMP + L-aspartate + GTP = N(6)-(1,2-dicarboxyethyl)-AMP + GDP + phosphate + 2 H(+). It functions in the pathway purine metabolism; AMP biosynthesis via de novo pathway; AMP from IMP: step 1/2. In terms of biological role, plays an important role in the de novo pathway of purine nucleotide biosynthesis. Catalyzes the first committed step in the biosynthesis of AMP from IMP. This is Adenylosuccinate synthetase from Bordetella petrii (strain ATCC BAA-461 / DSM 12804 / CCUG 43448).